A 299-amino-acid polypeptide reads, in one-letter code: MTKRTLYELQAENVRKTYLFIVLFSLILFAVGYFFVWYFNWGITGIIFLAIFIVLYNWIAYEQSDKIALTSVGAVPADPEKFYVLHNIVEEVALAAGVPKPKVYVMNEPQPNAFATGKDPKHASICVTTGLLQMMNREELQGVIAHEMSHIRNRDILLMTVVAIVAGLIILLRDVFLRSMWWGIGGERRRDKNDNLGIILLLIGLILSIIAPIVVLIIRSAISRQREYLADATGAYIVRDPYGLASALEKIGNYTRPMRTASSATAHMFISNPFGKVEYLFATHPPIEERIKRLKSLTI.

2 consecutive transmembrane segments (helical) span residues 19–39 (LFIV…VWYF) and 41–61 (WGIT…WIAY). H146 is a Zn(2+) binding site. Residue E147 is part of the active site. Position 150 (H150) interacts with Zn(2+). The next 2 membrane-spanning stretches (helical) occupy residues 156 to 176 (ILLM…RDVF) and 198 to 218 (IILL…VLII). Residue E227 participates in Zn(2+) binding.

This sequence belongs to the peptidase M48B family. Zn(2+) serves as cofactor.

The protein localises to the cell membrane. The chain is Protease HtpX homolog from Caldanaerobacter subterraneus subsp. tengcongensis (strain DSM 15242 / JCM 11007 / NBRC 100824 / MB4) (Thermoanaerobacter tengcongensis).